Reading from the N-terminus, the 396-residue chain is 2,3-diketo-5-methylthiopentyl-1-phosphate enolase (396 aa).

The Proton acceptor role is filled by K85. Residues K134, 160-163 (KDDE), H251, G323, and 345-346 (GG) contribute to the substrate site. Mg(2+) is bound by residues K160, D162, and E163. Position 160 is an N6-carboxylysine (K160).

It belongs to the RuBisCO large chain family. Type IV subfamily. As to quaternary structure, homodimer. The cofactor is Mg(2+).

The catalysed reaction is 5-methylsulfanyl-2,3-dioxopentyl phosphate = 2-hydroxy-5-methylsulfanyl-3-oxopent-1-enyl phosphate. The protein operates within amino-acid biosynthesis; L-methionine biosynthesis via salvage pathway; L-methionine from S-methyl-5-thio-alpha-D-ribose 1-phosphate: step 3/6. Functionally, catalyzes the enolization of 2,3-diketo-5-methylthiopentyl-1-phosphate (DK-MTP-1-P) into 2-hydroxy-3-keto-5-methylthiopentenyl-1-phosphate (HK-MTPenyl-1-P). This Exiguobacterium sibiricum (strain DSM 17290 / CCUG 55495 / CIP 109462 / JCM 13490 / 255-15) protein is 2,3-diketo-5-methylthiopentyl-1-phosphate enolase.